The primary structure comprises 161 residues: MTSIRIGNGYDIHQLVEGRPLILGGVQIEHSLGLKGHSDADVLTHAIMDALLGALSLGDIGHYFPPTDPKWAGADSLKLLEQVHQLILDRGWQIGNIDSVVVAERPKLKPHIEAMRDRISQVLNLSPELIGIKATTNEKLGPVGQEQGICSYAVALLTSDS.

2 residues coordinate a divalent metal cation: aspartate 11 and histidine 13. 4-CDP-2-C-methyl-D-erythritol 2-phosphate contacts are provided by residues 11 to 13 (DIH) and 37 to 38 (HS). Histidine 45 contributes to the a divalent metal cation binding site. 4-CDP-2-C-methyl-D-erythritol 2-phosphate contacts are provided by residues 59–61 (DIG) and 135–138 (TTNE).

The protein belongs to the IspF family. In terms of assembly, homotrimer. The cofactor is a divalent metal cation.

The catalysed reaction is 4-CDP-2-C-methyl-D-erythritol 2-phosphate = 2-C-methyl-D-erythritol 2,4-cyclic diphosphate + CMP. The protein operates within isoprenoid biosynthesis; isopentenyl diphosphate biosynthesis via DXP pathway; isopentenyl diphosphate from 1-deoxy-D-xylulose 5-phosphate: step 4/6. Involved in the biosynthesis of isopentenyl diphosphate (IPP) and dimethylallyl diphosphate (DMAPP), two major building blocks of isoprenoid compounds. Catalyzes the conversion of 4-diphosphocytidyl-2-C-methyl-D-erythritol 2-phosphate (CDP-ME2P) to 2-C-methyl-D-erythritol 2,4-cyclodiphosphate (ME-CPP) with a corresponding release of cytidine 5-monophosphate (CMP). The polypeptide is 2-C-methyl-D-erythritol 2,4-cyclodiphosphate synthase (Acaryochloris marina (strain MBIC 11017)).